The chain runs to 201 residues: MSRYRGPRVRIIRRLGVLPGLTNKTPQLKSSSPNQSAAKKISQYRIRLEEKQKLRFHYGITERQLLNYVRIARKAKGSTGQVLLQLLEMRLDNIVFRLGMAPTIPGARQLVNHRHVLVNDCIVDIPSYRCKPEDSITVKNRQKSQAIITKNIDFSQKAKVPNHLTFDSTQKKGLVNQILDRESIGLKINELLVVEYYSRQA.

The region spanning 89–150 (MRLDNIVFRL…RQKSQAIITK (62 aa)) is the S4 RNA-binding domain.

This sequence belongs to the universal ribosomal protein uS4 family. Part of the 30S ribosomal subunit. Contacts protein S5. The interaction surface between S4 and S5 is involved in control of translational fidelity.

It localises to the plastid. Its subcellular location is the chloroplast. Functionally, one of the primary rRNA binding proteins, it binds directly to 16S rRNA where it nucleates assembly of the body of the 30S subunit. With S5 and S12 plays an important role in translational accuracy. The polypeptide is Small ribosomal subunit protein uS4c (rps4) (Funaria hygrometrica (Moss)).